The sequence spans 200 residues: Lipopolysaccharide core heptose(II)-phosphate phosphatase (200 aa).

Positions 1–25 are cleaved as a signal peptide; that stretch reads MLAFCRSSLKSKKYFIILLALAAIA.

This sequence belongs to the phosphoglycerate mutase family. Ais subfamily.

Its subcellular location is the periplasm. It participates in bacterial outer membrane biogenesis; lipopolysaccharide metabolism. In terms of biological role, catalyzes the dephosphorylation of heptose(II) of the outer membrane lipopolysaccharide core. In Escherichia coli (strain SE11), this protein is Lipopolysaccharide core heptose(II)-phosphate phosphatase.